The sequence spans 278 residues: Ankyrin repeat and SOCS box protein 13 (278 aa).

ANK repeat units lie at residues 18 to 47, 51 to 80, 84 to 113, 116 to 145, 149 to 178, and 181 to 210; these read VERTPVHEAAQRGESLQLQQLIDSGACVNQ, DSITPLHAASLQGQAQCVQLLLAAGAQVDA, DGSTPLCDACASGSIECVKLLLSYGAKVNP, YTASPLHEACMSGSSECVRLLIDVGANLEA, HFGTPLHVACAREHLDCVKVLLNAGANVNA, and LHETALHHAAKVKNVDLIEMLIEFGGNIYA. The region spanning 229-278 is the SOCS box domain; sequence AKCFEYYEKTPLSLSQLCRVSLRKATGVRGLEKVAKLNIPPRLIDYLSYN.

This sequence belongs to the ankyrin SOCS box (ASB) family.

The protein operates within protein modification; protein ubiquitination. In terms of biological role, may be a substrate-recognition component of a SCF-like ECS (Elongin-Cullin-SOCS-box protein) E3 ubiquitin-protein ligase complex which mediates the ubiquitination and subsequent proteasomal degradation of target proteins. The protein is Ankyrin repeat and SOCS box protein 13 (Asb13) of Mus musculus (Mouse).